The chain runs to 704 residues: Tetratricopeptide repeat protein 12 (704 aa).

Thr-71 carries the post-translational modification Phosphothreonine. 3 TPR repeats span residues 105 to 138 (ADALKEKGNEAFVRGDYETAIFFYSEGLGKLKDM), 139 to 172 (KVLYTNRAQAFIKLGDYQKALVDCDWALKCDENC), and 173 to 206 (TKAYFHMGKAHVALKNYSKAKECYQKIEEINPKL).

It is found in the cytoplasm. Functionally, cytoplasmic protein that plays a role in the proper assembly of dynein arm complexes in motile cilia in both respiratory cells and sperm flagella. The protein is Tetratricopeptide repeat protein 12 (Ttc12) of Mus musculus (Mouse).